We begin with the raw amino-acid sequence, 158 residues long: uncharacterized protein (158 aa).

This is an uncharacterized protein from Pasteurella multocida (strain Pm70).